The primary structure comprises 347 residues: Bombesin receptor-activated protein C6orf89 (347 aa).

At 1-58 the chain is on the cytoplasmic side; the sequence is MDLAANEISIYDKLSETVDLVRQTGHQCGMSEKAIEKFIRQLLEKNEPQRPPPQYPLL. The chain crosses the membrane as a helical span at residues 59–79; it reads IVVYKVLATLGLILLTAYFVI. Residues 80-347 lie on the Extracellular side of the membrane; it reads QPFSPLAPEP…ICDGTAFSEL (268 aa).

In terms of assembly, homodimer. Interacts with BRS3. Interacts (via N-terminus) with SIN3B. Post-translationally, glycosylated.

It is found in the golgi apparatus membrane. It localises to the midbody. The protein localises to the cytoplasm. Its subcellular location is the nucleus. The protein resides in the nucleolus. Functionally, exhibits histone deacetylase (HDAC) enhancer properties. May play a role in cell cycle progression and wound repair of bronchial epithelial cells. The sequence is that of Bombesin receptor-activated protein C6orf89 (C6orf89) from Homo sapiens (Human).